The primary structure comprises 184 residues: NADH-quinone oxidoreductase subunit B (184 aa).

Cys37, Cys38, Cys103, and Cys132 together coordinate [4Fe-4S] cluster.

It belongs to the complex I 20 kDa subunit family. NDH-1 is composed of 14 different subunits. Subunits NuoB, C, D, E, F, and G constitute the peripheral sector of the complex. Requires [4Fe-4S] cluster as cofactor.

Its subcellular location is the cell membrane. The enzyme catalyses a quinone + NADH + 5 H(+)(in) = a quinol + NAD(+) + 4 H(+)(out). In terms of biological role, NDH-1 shuttles electrons from NADH, via FMN and iron-sulfur (Fe-S) centers, to quinones in the respiratory chain. The immediate electron acceptor for the enzyme in this species is believed to be a menaquinone. Couples the redox reaction to proton translocation (for every two electrons transferred, four hydrogen ions are translocated across the cytoplasmic membrane), and thus conserves the redox energy in a proton gradient. The polypeptide is NADH-quinone oxidoreductase subunit B (Rhodococcus opacus (strain B4)).